Here is a 124-residue protein sequence, read N- to C-terminus: Small ribosomal subunit protein bS6 (124 aa).

Positions 100–124 (KERRAARQKTGETQENVSQEESSTN) are disordered. The segment covering 110–124 (GETQENVSQEESSTN) has biased composition (polar residues).

This sequence belongs to the bacterial ribosomal protein bS6 family.

Its function is as follows. Binds together with bS18 to 16S ribosomal RNA. The polypeptide is Small ribosomal subunit protein bS6 (Fervidobacterium nodosum (strain ATCC 35602 / DSM 5306 / Rt17-B1)).